The chain runs to 208 residues: Small ribosomal subunit protein uS4 (208 aa).

The tract at residues 28–48 is disordered; that stretch reads YFEKRPYPPGEHGRARRRTES. Positions 95–159 constitute an S4 RNA-binding domain; that stretch reads MRLDALVLRS…ARTPFQVAAA (65 aa).

The protein belongs to the universal ribosomal protein uS4 family. As to quaternary structure, part of the 30S ribosomal subunit. Contacts protein S5. The interaction surface between S4 and S5 is involved in control of translational fidelity.

Its function is as follows. One of the primary rRNA binding proteins, it binds directly to 16S rRNA where it nucleates assembly of the body of the 30S subunit. Functionally, with S5 and S12 plays an important role in translational accuracy. In Beutenbergia cavernae (strain ATCC BAA-8 / DSM 12333 / CCUG 43141 / JCM 11478 / NBRC 16432 / NCIMB 13614 / HKI 0122), this protein is Small ribosomal subunit protein uS4.